Reading from the N-terminus, the 132-residue chain is Large ribosomal subunit protein uL24 (132 aa).

Belongs to the universal ribosomal protein uL24 family. Part of the 50S ribosomal subunit.

Functionally, one of two assembly initiator proteins, it binds directly to the 5'-end of the 23S rRNA, where it nucleates assembly of the 50S subunit. In terms of biological role, one of the proteins that surrounds the polypeptide exit tunnel on the outside of the subunit. The sequence is that of Large ribosomal subunit protein uL24 from Synechococcus sp. (strain JA-2-3B'a(2-13)) (Cyanobacteria bacterium Yellowstone B-Prime).